The following is an 87-amino-acid chain: Large ribosomal subunit protein bL31B-2/bL31B-3 (87 aa).

The protein belongs to the bacterial ribosomal protein bL31 family. Type B subfamily. In terms of assembly, part of the 50S ribosomal subunit.

The protein is Large ribosomal subunit protein bL31B-2/bL31B-3 (rpmE2-2) of Escherichia coli O157:H7.